The chain runs to 149 residues: Transcriptional repressor NrdR (149 aa).

Residues 3–34 (CPFCSATDTKVIDSRLVAEGHQVRRRRECTEC) fold into a zinc finger. The 91-residue stretch at 49–139 (PRVIKRDGSR…VYRAFEDVSE (91 aa)) folds into the ATP-cone domain.

It belongs to the NrdR family. Requires Zn(2+) as cofactor.

In terms of biological role, negatively regulates transcription of bacterial ribonucleotide reductase nrd genes and operons by binding to NrdR-boxes. The chain is Transcriptional repressor NrdR from Shewanella baltica (strain OS223).